An 88-amino-acid chain; its full sequence is Small ribosomal subunit protein uS17 (88 aa).

The protein belongs to the universal ribosomal protein uS17 family. In terms of assembly, part of the 30S ribosomal subunit.

In terms of biological role, one of the primary rRNA binding proteins, it binds specifically to the 5'-end of 16S ribosomal RNA. The protein is Small ribosomal subunit protein uS17 of Marinobacter nauticus (strain ATCC 700491 / DSM 11845 / VT8) (Marinobacter aquaeolei).